The sequence spans 1372 residues: Collagen alpha-2(I) chain (1372 aa).

Positions 1–22 (MLSFVDTRTLLLLAVTSCLATC) are cleaved as a signal peptide. A Pyrrolidone carboxylic acid modification is found at Gln23. A propeptide spans 23–85 (QYLQSGSVRK…PPGLTGNFAA (63 aa)) (N-terminal propeptide). Positions 28–1135 (GSVRKGPTGD…DQPRSQPSLR (1108 aa)) are disordered. The span at 59-77 (MGPPGPPGSPGPPGSPAPP) shows a compositional bias: pro residues. Allysine is present on Lys90. Over residues 95–146 (GPGPMGLMGPRGPPGAVGAPGPQGFQGPAGEPGEPGQTGPAGPRGPAGSPGK) the composition is skewed to low complexity. Over residues 147–161 (AGEDGHPGKPGRPGE) the composition is skewed to basic and acidic residues. Position 183 is a 5-hydroxylysine; alternate (Lys183). Residue Lys183 is glycosylated (O-linked (Gal...) hydroxylysine; alternate). 7 stretches are compositionally biased toward low complexity: residues 231-260 (VGAPGPAGARGSDGSVGPVGPAGPIGSAGP), 285-299 (AGPRGEVGLPGLSGP), 306-327 (PGTNGLTGAKGATGLPGVAGAP), 336-351 (PGPAGAAGATGARGLV), 390-416 (PGEAGSAGPAGPPGLRGSPGSRGLPGA), 476-495 (LPGIDGRPGPIGPAGPRGEA), and 519-537 (PGLAGARGAPGPDGNNGAQ). Positions 544–553 (GVQGGKGEQG) are enriched in gly residues. Over residues 600–639 (PGESGAAGPSGPIGSRGPSGAPGPDGNKGEAGAVGAPGSA) the composition is skewed to low complexity. Gly residues predominate over residues 640–649 (GASGPGGLPG). Composition is skewed to low complexity over residues 681 to 716 (RGIPGAVGAPGPAGASGDRGEAGAAGPSGPAGPRGS) and 725 to 743 (PAGPNGFAGPAGAAGQPGA). The segment covering 744–753 (KGEKGTKGPK) has biased composition (basic and acidic residues). Low complexity predominate over residues 755-771 (ENGIVGPTGSVGAAGPS). Positions 781–790 (GSRGDGGPPG) are enriched in gly residues. Low complexity-rich tracts occupy residues 792–801 (TGFPGAAGRT), 855–882 (SGEPGTAGAPGTAGPQGLLGAPGILGLP), 905–927 (ISGPPGARGPPGAVGSPGVNGAP), 957–978 (PGSIGPTGAAGAPGPHGSVGPA), and 987–1007 (PGPAGSVGPVGAVGPRGPSGP). The span at 1011 to 1022 (RGDKGEPGDKGH) shows a compositional bias: basic and acidic residues. A compositionally biased stretch (pro residues) spans 1095-1107 (AGPPGPPGPPGPP). Positions 1126-1372 (DQPRSQPSLR…RVEVGPVCFK (247 aa)) are cleaved as a propeptide — C-terminal propeptide. One can recognise a Fibrillar collagen NC1 domain in the interval 1139-1372 (YEVDATLKSL…RVEVGPVCFK (234 aa)). 3 disulfides stabilise this stretch: Cys1169–Cys1201, Cys1209–Cys1370, and Cys1278–Cys1323. 5 residues coordinate Ca(2+): Asp1187, Asn1189, Gln1190, Cys1192, and Asp1195. N-linked (GlcNAc...) asparagine glycosylation occurs at Asn1273.

Belongs to the fibrillar collagen family. In terms of assembly, trimers of one alpha 2(I) and two alpha 1(I) chains. Interacts (via C-terminus) with TMEM131 (via PapD-L domain); the interaction is direct and is involved in assembly and TRAPPIII ER-to-Golgi transport complex-dependent secretion of collagen. In terms of processing, prolines at the third position of the tripeptide repeating unit (G-X-Y) are hydroxylated in some or all of the chains. As to expression, expressed in kidney glomeruli.

It localises to the secreted. The protein resides in the extracellular space. It is found in the extracellular matrix. Type I collagen is a member of group I collagen (fibrillar forming collagen). The sequence is that of Collagen alpha-2(I) chain (Col1a2) from Mus musculus (Mouse).